Reading from the N-terminus, the 326-residue chain is Biotin synthase (326 aa).

The Radical SAM core domain maps to 50–279 (FNGEKVDVEQ…ESVIKISGGR (230 aa)). [4Fe-4S] cluster is bound by residues C68, C72, and C75. 4 residues coordinate [2Fe-2S] cluster: C112, C145, C204, and K274.

This sequence belongs to the radical SAM superfamily. Biotin synthase family. As to quaternary structure, homodimer. [4Fe-4S] cluster serves as cofactor. It depends on [2Fe-2S] cluster as a cofactor.

It catalyses the reaction (4R,5S)-dethiobiotin + (sulfur carrier)-SH + 2 reduced [2Fe-2S]-[ferredoxin] + 2 S-adenosyl-L-methionine = (sulfur carrier)-H + biotin + 2 5'-deoxyadenosine + 2 L-methionine + 2 oxidized [2Fe-2S]-[ferredoxin]. It functions in the pathway cofactor biosynthesis; biotin biosynthesis; biotin from 7,8-diaminononanoate: step 2/2. In terms of biological role, catalyzes the conversion of dethiobiotin (DTB) to biotin by the insertion of a sulfur atom into dethiobiotin via a radical-based mechanism. The chain is Biotin synthase from Nitrosopumilus maritimus (strain SCM1).